We begin with the raw amino-acid sequence, 298 residues long: Acetylglutamate kinase (298 aa).

Residues 69–70 (GG), arginine 91, and asparagine 196 contribute to the substrate site.

Belongs to the acetylglutamate kinase family. ArgB subfamily.

Its subcellular location is the cytoplasm. It catalyses the reaction N-acetyl-L-glutamate + ATP = N-acetyl-L-glutamyl 5-phosphate + ADP. It functions in the pathway amino-acid biosynthesis; L-arginine biosynthesis; N(2)-acetyl-L-ornithine from L-glutamate: step 2/4. Functionally, catalyzes the ATP-dependent phosphorylation of N-acetyl-L-glutamate. The sequence is that of Acetylglutamate kinase from Rhodopseudomonas palustris (strain BisA53).